Consider the following 523-residue polypeptide: MQRLIPIAFSSSVKGFVRRHYLLLERGNNPETSLSRSFSGASHHHHYRERLRNELHCIKFDDAFSLFCEMLQSRPIPSIVDFTRVLTVIAKMNKFDIVIYLYHKMENLGISHDLYSFTILIHCFCRCSRLSLALALLGKMMKLGFRPSIVTLGSLLNGFCQGNRFQEAVSLVDSMDGFGFVPNVVIYNTVINGLCKNRDLNNALEVFYCMEKKGIRADAVTYNTLISGLSNSGRWTDAARLLRDMVKRKIDPNVIFFTALIDTFVKEGNLLEARNLYKEMIRRSVVPNVFTYNSLINGFCIHGCLGDAKYMFDLMVSKGCFPDVVTYNTLITGFCKSKRVEDGMKLFCEMTYQGLVGDAFTYNTLIHGYCQAGKLNVAQKVFNRMVDCGVSPDIVTYNILLDCLCNNGKIEKALVMVEDLQKSEMDVDIITYNIIIQGLCRTDKLKEAWCLFRSLTRKGVKPDAIAYITMISGLCRKGLQREADKLCRRMKEDGFMPSERIYDETLRDHYTSLSAELIKAAHE.

PPR repeat units follow at residues 43 to 77, 78 to 112, 113 to 147, 148 to 182, 183 to 217, 218 to 252, 253 to 287, 288 to 322, 323 to 357, 358 to 392, 393 to 427, 428 to 462, and 463 to 497; these read HHHHYRERLRNELHCIKFDDAFSLFCEMLQSRPIP, SIVDFTRVLTVIAKMNKFDIVIYLYHKMENLGISH, DLYSFTILIHCFCRCSRLSLALALLGKMMKLGFRP, SIVTLGSLLNGFCQGNRFQEAVSLVDSMDGFGFVP, NVVIYNTVINGLCKNRDLNNALEVFYCMEKKGIRA, DAVTYNTLISGLSNSGRWTDAARLLRDMVKRKIDP, NVIFFTALIDTFVKEGNLLEARNLYKEMIRRSVVP, NVFTYNSLINGFCIHGCLGDAKYMFDLMVSKGCFP, DVVTYNTLITGFCKSKRVEDGMKLFCEMTYQGLVG, DAFTYNTLIHGYCQAGKLNVAQKVFNRMVDCGVSP, DIVTYNILLDCLCNNGKIEKALVMVEDLQKSEMDV, DIITYNIIIQGLCRTDKLKEAWCLFRSLTRKGVKP, and DAIAYITMISGLCRKGLQREADKLCRRMKEDGFMP.

This sequence belongs to the PPR family. P subfamily.

This chain is Pentatricopeptide repeat-containing protein At1g64580, found in Arabidopsis thaliana (Mouse-ear cress).